Consider the following 599-residue polypeptide: ATP-dependent zinc metalloprotease FtsH 3 (599 aa).

Residues 1–7 (MKYKKKN) lie on the Cytoplasmic side of the membrane. A helical membrane pass occupies residues 8–28 (ILFITTIIVIYLAFLFNWLEI). The Extracellular segment spans residues 29-128 (GIFKPKGESI…PFSWLLSIFS (100 aa)). The helical transmembrane segment at 129 to 149 (ILLNFINVLSSLVFTIYIFLA) threads the bilayer. The Cytoplasmic segment spans residues 150 to 599 (IHRESGKLNS…IEQLVVNTKK (450 aa)). 214–221 (GPPGTGKT) contacts ATP. Residue His436 participates in Zn(2+) binding. The active site involves Glu437. Positions 440 and 512 each coordinate Zn(2+).

In the central section; belongs to the AAA ATPase family. The protein in the C-terminal section; belongs to the peptidase M41 family. Homohexamer. The cofactor is Zn(2+).

It is found in the cell membrane. Functionally, acts as a processive, ATP-dependent zinc metallopeptidase for both cytoplasmic and membrane proteins. Plays a role in the quality control of integral membrane proteins. This is ATP-dependent zinc metalloprotease FtsH 3 from Phytoplasma mali (strain AT).